The primary structure comprises 479 residues: Membrane-bound lytic murein transglycosylase F (479 aa).

An N-terminal signal peptide occupies residues 1-15 (MKRLLLVLCYITLLA). The segment at 16–258 (GCQKVVVEQE…HLNEKYFAHV (243 aa)) is non-LT domain. Residues 260-479 (RFDYVDTRAF…QTDAIQPQQP (220 aa)) form an LT domain region. Glutamate 303 is an active-site residue. The interval 457–479 (LQTAEAKETEEKPQTDAIQPQQP) is disordered. A compositionally biased stretch (basic and acidic residues) spans 461–470 (EAKETEEKPQ).

This sequence in the N-terminal section; belongs to the bacterial solute-binding protein 3 family. In the C-terminal section; belongs to the transglycosylase Slt family.

The protein localises to the cell outer membrane. It catalyses the reaction Exolytic cleavage of the (1-&gt;4)-beta-glycosidic linkage between N-acetylmuramic acid (MurNAc) and N-acetylglucosamine (GlcNAc) residues in peptidoglycan, from either the reducing or the non-reducing ends of the peptidoglycan chains, with concomitant formation of a 1,6-anhydrobond in the MurNAc residue.. Functionally, murein-degrading enzyme that degrades murein glycan strands and insoluble, high-molecular weight murein sacculi, with the concomitant formation of a 1,6-anhydromuramoyl product. Lytic transglycosylases (LTs) play an integral role in the metabolism of the peptidoglycan (PG) sacculus. Their lytic action creates space within the PG sacculus to allow for its expansion as well as for the insertion of various structures such as secretion systems and flagella. In Shewanella pealeana (strain ATCC 700345 / ANG-SQ1), this protein is Membrane-bound lytic murein transglycosylase F.